The chain runs to 296 residues: 4-hydroxybenzoate octaprenyltransferase (296 aa).

8 helical membrane passes run 29 to 49, 55 to 75, 102 to 122, 146 to 166, 169 to 189, 219 to 239, 241 to 261, and 275 to 295; these read IGIYLLLWPTLWSLWIAADGV, LLIFVLGVILMRAAGCVINDF, AWITFAVLVALSFGLVLLTNA, YYPQVVLGAAYSWGILMAFTA, GELPASAWLLFLANVLWTVAY, LIIGSLQGLTLLLLALAGSRF, LGLYFYLGLAVAAACFVWEAW, and FLHNHWAGLAIFLGTVADYAL.

This sequence belongs to the UbiA prenyltransferase family. It depends on Mg(2+) as a cofactor.

It is found in the cell inner membrane. It carries out the reaction all-trans-octaprenyl diphosphate + 4-hydroxybenzoate = 4-hydroxy-3-(all-trans-octaprenyl)benzoate + diphosphate. Its pathway is cofactor biosynthesis; ubiquinone biosynthesis. Functionally, catalyzes the prenylation of para-hydroxybenzoate (PHB) with an all-trans polyprenyl group. Mediates the second step in the final reaction sequence of ubiquinone-8 (UQ-8) biosynthesis, which is the condensation of the polyisoprenoid side chain with PHB, generating the first membrane-bound Q intermediate 3-octaprenyl-4-hydroxybenzoate. This is 4-hydroxybenzoate octaprenyltransferase from Pseudomonas aeruginosa (strain UCBPP-PA14).